The primary structure comprises 481 residues: Glutamyl-tRNA(Gln) amidotransferase subunit A (481 aa).

Residues K74 and S149 each act as charge relay system in the active site. S173 (acyl-ester intermediate) is an active-site residue.

This sequence belongs to the amidase family. GatA subfamily. As to quaternary structure, heterotrimer of A, B and C subunits.

The catalysed reaction is L-glutamyl-tRNA(Gln) + L-glutamine + ATP + H2O = L-glutaminyl-tRNA(Gln) + L-glutamate + ADP + phosphate + H(+). Its function is as follows. Allows the formation of correctly charged Gln-tRNA(Gln) through the transamidation of misacylated Glu-tRNA(Gln) in organisms which lack glutaminyl-tRNA synthetase. The reaction takes place in the presence of glutamine and ATP through an activated gamma-phospho-Glu-tRNA(Gln). This is Glutamyl-tRNA(Gln) amidotransferase subunit A from Francisella tularensis subsp. mediasiatica (strain FSC147).